The following is a 72-amino-acid chain: Translation initiation factor IF-1 (72 aa).

The S1-like domain maps to 1-72 (MAKEDCIEME…TKGRIKFRSK (72 aa)).

It belongs to the IF-1 family. In terms of assembly, component of the 30S ribosomal translation pre-initiation complex which assembles on the 30S ribosome in the order IF-2 and IF-3, IF-1 and N-formylmethionyl-tRNA(fMet); mRNA recruitment can occur at any time during PIC assembly.

It is found in the cytoplasm. One of the essential components for the initiation of protein synthesis. Stabilizes the binding of IF-2 and IF-3 on the 30S subunit to which N-formylmethionyl-tRNA(fMet) subsequently binds. Helps modulate mRNA selection, yielding the 30S pre-initiation complex (PIC). Upon addition of the 50S ribosomal subunit IF-1, IF-2 and IF-3 are released leaving the mature 70S translation initiation complex. The protein is Translation initiation factor IF-1 of Francisella tularensis subsp. novicida (strain U112).